Consider the following 378-residue polypeptide: Probable 3-hydroxyisobutyryl-CoA hydrolase 3 (378 aa).

2 residues coordinate substrate: glutamate 138 and aspartate 146.

The protein belongs to the enoyl-CoA hydratase/isomerase family.

It localises to the peroxisome. It catalyses the reaction 3-hydroxy-2-methylpropanoyl-CoA + H2O = 3-hydroxy-2-methylpropanoate + CoA + H(+). The protein operates within amino-acid degradation; L-valine degradation. Functionally, involved in valine catabolism. This Arabidopsis thaliana (Mouse-ear cress) protein is Probable 3-hydroxyisobutyryl-CoA hydrolase 3.